The chain runs to 509 residues: Tyrosine-protein kinase STK (509 aa).

A compositionally biased stretch (polar residues) spans 1–16; that stretch reads MGPCCSKQTKALNNQP. A disordered region spans residues 1 to 23; that stretch reads MGPCCSKQTKALNNQPDKSKSKD. Glycine 2 carries N-myristoyl glycine lipidation. The SH3 domain maps to 59–120; the sequence is PGVTIFVALY…PSTYVAPEKS (62 aa). Residues 126–218 form the SH2 domain; it reads WYFGDVKRAE…GLVCALTLPC (93 aa). Residues 240–495 form the Protein kinase domain; that stretch reads LRLNRKLGAG…LQGVLEDYFV (256 aa). Residues 246-254 and lysine 268 each bind ATP; that span reads LGAGQFGEV. The Proton acceptor role is filled by aspartate 360. Tyrosine 390 is subject to Phosphotyrosine; by autocatalysis.

It belongs to the protein kinase superfamily. Tyr protein kinase family. SRC subfamily.

The catalysed reaction is L-tyrosyl-[protein] + ATP = O-phospho-L-tyrosyl-[protein] + ADP + H(+). In Hydra vulgaris (Hydra), this protein is Tyrosine-protein kinase STK (STK).